The chain runs to 147 residues: uncharacterized protein (147 aa).

Residues 11 to 147 form the HTH marR-type domain; it reads NTSPGFLLWQ…SGLQELLKHE (137 aa). Positions 61 to 84 form a DNA-binding region, H-T-H motif; that stretch reads QKKLASFSQTNIMMVSEVVRTLEK.

This is an uncharacterized protein from Bacillus subtilis (strain 168).